The chain runs to 559 residues: MPSIKSDIEIARAATKRPIFEIGAKLGIAAEQLVPYGHDKAKVSAEFIAAQAGKKDGKLILVTAINPTPAGEGKTTTTVGLGDGLNRIGKKAIVCIREASLGPCFGVKGGAAGGGYAQVVPMEDINLHFTGDFHAITSAHNLLAAIIDNHIYWGNEENIDIRRITWRRVMDMNDRALRSMISSLGGVANGFPRQGGFDITVASEVMAILCLATDLKDLERRLGDIIIGYRFDKTPVHARDLKADGAMAVLLKDAMQPNLVQTLESNPAFVHGGPFANIAHGCNSVTATKTALKLGEYVVTEAGFGADLGAEKFFDIKCRKAGLRPDAAVIVATVRALKMNGGVKKEDLGTEDVAALKKGCANLGRHVANVRRFGVPVVVAINHFVSDTDAEIAAVKEFVSRLGAEAILCQHWAKGSAGIEELAHKVVELAESGQAKFQPLYGDDISLFEKIEIIASKIYHAGEVTADKAVRDQLQSWEEQGYGKLPVCMAKTQYSFSTDPNLRGAPEGHIVSVREVRLSAGAGFVVAITGEIMTMPGLPKSPSAERIFLNDQGYIEGLF.

Residue 68-75 (TPAGEGKT) participates in ATP binding.

It belongs to the formate--tetrahydrofolate ligase family.

The enzyme catalyses (6S)-5,6,7,8-tetrahydrofolate + formate + ATP = (6R)-10-formyltetrahydrofolate + ADP + phosphate. Its pathway is one-carbon metabolism; tetrahydrofolate interconversion. The chain is Formate--tetrahydrofolate ligase from Rhizobium etli (strain ATCC 51251 / DSM 11541 / JCM 21823 / NBRC 15573 / CFN 42).